The following is an 843-amino-acid chain: Speckle targeted PIP5K1A-regulated poly(A) polymerase (843 aa).

The segment at Phe-25–Glu-55 adopts a Matrin-type zinc-finger fold. An RRM domain is found at Glu-54–Ser-126. Residues Pro-134–Gly-146 are compositionally biased toward basic residues. The disordered stretch occupies residues Pro-134–Glu-157. Ser-215 contacts ATP. Mg(2+) is bound by residues Asp-226 and Asp-228. UTP is bound by residues Asp-226 and Asp-228. Residues Val-241–Ser-255 show a composition bias toward basic and acidic residues. The interval Val-241–Leu-292 is disordered. Asn-354 lines the ATP pocket. The UTP site is built by Asn-354, Arg-376, Tyr-398, and His-516. One can recognise a PAP-associated domain in the interval Ser-456–His-516. The interval Pro-564–Gln-837 is KA1; binds the bulging loops of U6 snRNA but is dispensable for terminal uridylyltransferase activity. Residues Gln-653 to Thr-691 form a disordered region. The span at Glu-658–Glu-670 shows a compositional bias: basic and acidic residues.

This sequence belongs to the DNA polymerase type-B-like family. As to quaternary structure, associates with the cleavage and polyadenylation specificity factor (CPSF) complex. Requires Mg(2+) as cofactor. Mn(2+) is required as a cofactor.

It localises to the nucleus. The protein localises to the nucleolus. The protein resides in the nucleus speckle. It carries out the reaction RNA(n) + UTP = RNA(n)-3'-uridine ribonucleotide + diphosphate. The enzyme catalyses RNA(n) + ATP = RNA(n)-3'-adenine ribonucleotide + diphosphate. Poly(A) polymerase that creates the 3'-poly(A) tail of specific pre-mRNAs. In addition to polyadenylation, it is also required for the 3'-end cleavage of pre-mRNAs: binds to the 3'UTR of targeted pre-mRNAs and promotes the recruitment and assembly of the CPSF complex on the 3'UTR of pre-mRNAs. In addition to adenylyltransferase activity, also has uridylyltransferase activity. However, the ATP ratio is higher than UTP in cells, suggesting that it functions primarily as a poly(A) polymerase. This Xenopus tropicalis (Western clawed frog) protein is Speckle targeted PIP5K1A-regulated poly(A) polymerase (tut1).